A 344-amino-acid chain; its full sequence is L-rhamnose-proton symporter (344 aa).

Helical transmembrane passes span 5–25 (ILLGIFWHFVGATSAACFYAP), 38–58 (WAIAGIFSWILLPWGISYWLL), 72–92 (ILLPVFLFGAMWGIGNIGYGL), 101–121 (MGIGIAIGITLIVGTLMTPII), 137–157 (TLIGVVIAVVGVAVVSYAGLL), 175–195 (LALAVMCGIFSAGMSFAMSAA), 214–234 (LPSYVVIMGGGAIINLGFCII), 259–279 (ILFSALGGIMWYFQFFFYAWG), 289–309 (FMSWMLHMSFYVLCGGIVGLL), and 323–343 (VLCIGCLIIVLAANIVGLGMA).

It belongs to the L-rhamnose transporter (TC 2.A.7.6) family.

The protein localises to the cell inner membrane. It carries out the reaction L-rhamnopyranose(in) + H(+)(in) = L-rhamnopyranose(out) + H(+)(out). Uptake of L-rhamnose across the cytoplasmic membrane with the concomitant transport of protons into the cell (symport system). This Mannheimia succiniciproducens (strain KCTC 0769BP / MBEL55E) protein is L-rhamnose-proton symporter.